The primary structure comprises 396 residues: ATP-dependent RNA helicase eIF4A (396 aa).

Residues 22–50 (YSFDDLNLKPNIVRGIFGYGYESPSAIQQ) carry the Q motif motif. The Helicase ATP-binding domain maps to 53–223 (ILPITEGRDV…TKFMNNPVRI (171 aa)). Residue 66 to 73 (AQSGTGKT) coordinates ATP. Residues 171 to 174 (DEAD) carry the DEAD box motif. One can recognise a Helicase C-terminal domain in the interval 234-395 (GIKQFYINVE…EMPANIGELF (162 aa)).

This sequence belongs to the DEAD box helicase family. eIF4A subfamily. Component of the eIF4F complex, which composition varies with external and internal environmental conditions. It is composed of at least eIF4A, eIF4E and eIF4G.

The protein resides in the cytoplasm. It carries out the reaction ATP + H2O = ADP + phosphate + H(+). Functionally, ATP-dependent RNA helicase which is a subunit of the eIF4F complex involved in cap recognition and is required for mRNA binding to ribosome. In the current model of translation initiation, eIF4A unwinds RNA secondary structures in the 5'-UTR of mRNAs which is necessary to allow efficient binding of the small ribosomal subunit, and subsequent scanning for the initiator codon. This is ATP-dependent RNA helicase eIF4A (TIF1) from Meyerozyma guilliermondii (strain ATCC 6260 / CBS 566 / DSM 6381 / JCM 1539 / NBRC 10279 / NRRL Y-324) (Yeast).